Here is a 245-residue protein sequence, read N- to C-terminus: MSGVGVGRLIGVGTGPGDPELLTVKAVKALGQADVLAYFAKAGRSGNGRAVVEGLLKPDLVELPLYYPVTTEIDKDDGAYKTQITDFYNASAEAVAAHLAAGRTVAVLSEGDPLFYGSYMHLHVRLANRFPVEVIPGITAMSGCWSLAGLPLVQGDDVLSVLPGTMAEAELGRRLADTEAAVIMKVGRNLPKIRRALAASGRLDQAVYVERGTMKNAAMTALAEKADDEAPYFSLVLVPGWKDRP.

The protein belongs to the precorrin methyltransferase family. As to quaternary structure, homodimer.

The enzyme catalyses precorrin-2 + S-adenosyl-L-methionine = precorrin-3A + S-adenosyl-L-homocysteine + H(+). Its pathway is cofactor biosynthesis; adenosylcobalamin biosynthesis; cob(II)yrinate a,c-diamide from precorrin-2 (aerobic route): step 1/10. Its function is as follows. Methylates precorrin-2 at the C-20 position to produce precorrin-3A. The polypeptide is Precorrin-2 C(20)-methyltransferase (cobI) (Sinorhizobium sp).